Here is a 336-residue protein sequence, read N- to C-terminus: UDP-3-O-acylglucosamine N-acyltransferase (336 aa).

Residue H236 is the Proton acceptor of the active site.

The protein belongs to the transferase hexapeptide repeat family. LpxD subfamily. Homotrimer.

It catalyses the reaction a UDP-3-O-[(3R)-3-hydroxyacyl]-alpha-D-glucosamine + a (3R)-hydroxyacyl-[ACP] = a UDP-2-N,3-O-bis[(3R)-3-hydroxyacyl]-alpha-D-glucosamine + holo-[ACP] + H(+). Its pathway is bacterial outer membrane biogenesis; LPS lipid A biosynthesis. Catalyzes the N-acylation of UDP-3-O-acylglucosamine using 3-hydroxyacyl-ACP as the acyl donor. Is involved in the biosynthesis of lipid A, a phosphorylated glycolipid that anchors the lipopolysaccharide to the outer membrane of the cell. This Aromatoleum aromaticum (strain DSM 19018 / LMG 30748 / EbN1) (Azoarcus sp. (strain EbN1)) protein is UDP-3-O-acylglucosamine N-acyltransferase.